A 157-amino-acid chain; its full sequence is Isotocin-neurophysin IT 1 (157 aa).

Residues Met-1–Ala-20 form the signal peptide. A disulfide bond links Cys-21 and Cys-26. Gly-29 is modified (glycine amide). 7 cysteine pairs are disulfide-bonded: Cys-42/Cys-86, Cys-45/Cys-59, Cys-53/Cys-76, Cys-60/Cys-66, Cys-93/Cys-106, Cys-100/Cys-118, and Cys-107/Cys-112.

The protein belongs to the vasopressin/oxytocin family. Post-translationally, seven disulfide bonds are present in neurophysin.

Its subcellular location is the secreted. Isotocin causes contraction of smooth muscles. The chain is Isotocin-neurophysin IT 1 from Oncorhynchus keta (Chum salmon).